A 467-amino-acid polypeptide reads, in one-letter code: Glycogen synthase kinase-3 (467 aa).

Basic and acidic residues predominate over residues 1–20; the sequence is MSSKDQILEKDKKETDDNGN. A disordered region spans residues 1–42; the sequence is MSSKDQILEKDKKETDDNGNKKTTTTTSSSSSSSSSSKPRSN. The span at 23–37 shows a compositional bias: low complexity; the sequence is TTTTTSSSSSSSSSS. Residues 56–339 enclose the Protein kinase domain; the sequence is YITEGVIGNG…PVEICAHPFF (284 aa). ATP contacts are provided by residues 62 to 70 and Lys-85; that span reads IGNGSFGVV. Residue Asp-179 is the Proton acceptor of the active site. Phosphotyrosine; by zakA occurs at positions 214 and 220. Residues 400 to 467 are disordered; sequence SSNQSSSSNS…TTTTTTTSNH (68 aa).

The protein belongs to the protein kinase superfamily. CMGC Ser/Thr protein kinase family. GSK-3 subfamily. Mg(2+) serves as cofactor.

It carries out the reaction L-seryl-[tau protein] + ATP = O-phospho-L-seryl-[tau protein] + ADP + H(+). It catalyses the reaction L-threonyl-[tau protein] + ATP = O-phospho-L-threonyl-[tau protein] + ADP + H(+). With respect to regulation, inhibited by lithium. Lithium inhibition is competitive with respect to magnesium but non-competitive with respect to the peptide substrate. Its function is as follows. During cellular differentiation, may mediate an extracellular cyclic AMP stimulated signal transduction pathway that regulates prespore and prestalk B-cell proportions through inhibition of stalk cell formation and induction of prespore cell differentiation. The cAMP receptor carC appears to activate gskA via the tyrosine kinases zakA and zak2, to stimulate prespore differentiation, while carD appears to negatively regulate gskA, to promote prestalk formation. The sequence is that of Glycogen synthase kinase-3 (gskA) from Dictyostelium discoideum (Social amoeba).